The chain runs to 80 residues: D-alanyl carrier protein (80 aa).

The 77-residue stretch at 1 to 77 (MDIQKQIVDI…KLVEQVKKLQ (77 aa)) folds into the Carrier domain. The residue at position 35 (S35) is an O-(pantetheine 4'-phosphoryl)serine.

It belongs to the DltC family. Post-translationally, 4'-phosphopantetheine is transferred from CoA to a specific serine of apo-DCP.

It is found in the cytoplasm. Its pathway is cell wall biogenesis; lipoteichoic acid biosynthesis. Functionally, carrier protein involved in the D-alanylation of lipoteichoic acid (LTA). The loading of thioester-linked D-alanine onto DltC is catalyzed by D-alanine--D-alanyl carrier protein ligase DltA. The DltC-carried D-alanyl group is further transferred to cell membrane phosphatidylglycerol (PG) by forming an ester bond, probably catalyzed by DltD. D-alanylation of LTA plays an important role in modulating the properties of the cell wall in Gram-positive bacteria, influencing the net charge of the cell wall. This Lactobacillus delbrueckii subsp. bulgaricus (strain ATCC 11842 / DSM 20081 / BCRC 10696 / JCM 1002 / NBRC 13953 / NCIMB 11778 / NCTC 12712 / WDCM 00102 / Lb 14) protein is D-alanyl carrier protein.